The following is a 1262-amino-acid chain: Tau-tubulin kinase homolog Asator (1262 aa).

A disordered region spans residues 13 to 35 (NASAPDDGNQSCQPSSKQDQYLS). The segment covering 20-35 (GNQSCQPSSKQDQYLS) has biased composition (polar residues). The 264-residue stretch at 173–436 (WKVVRKIGGG…MLIGLFERCM (264 aa)) folds into the Protein kinase domain. ATP is bound by residues 179-187 (IGGGGFGEI) and K202. Residue D293 is the Proton acceptor of the active site. Disordered stretches follow at residues 662–724 (TVTN…TSNA), 755–792 (RSATSTNLRPSSSASQRINSGSTIGGAVGNGSNTARSS), and 984–1003 (KDSALQLNSTNDSLDKSRHR). A compositionally biased stretch (basic and acidic residues) spans 667–679 (KTSEVNRSTEEQK). The span at 755–776 (RSATSTNLRPSSSASQRINSGS) shows a compositional bias: polar residues.

It belongs to the protein kinase superfamily. CK1 Ser/Thr protein kinase family. In terms of assembly, interacts with Mgtor. It depends on Mg(2+) as a cofactor. In terms of tissue distribution, detected in larval brain.

It is found in the cytoplasm. The protein resides in the cytoskeleton. Its subcellular location is the spindle. The enzyme catalyses L-seryl-[protein] + ATP = O-phospho-L-seryl-[protein] + ADP + H(+). It catalyses the reaction L-threonyl-[protein] + ATP = O-phospho-L-threonyl-[protein] + ADP + H(+). Functionally, probable serine/threonine protein kinase. The polypeptide is Tau-tubulin kinase homolog Asator (Drosophila melanogaster (Fruit fly)).